Reading from the N-terminus, the 365-residue chain is Protein SGT1 homolog (365 aa).

Ala2 carries the post-translational modification N-acetylalanine. TPR repeat units lie at residues 11-44, 45-78, and 79-112; these read SQRFFQSFSDALIDEDPQAALEELTKALEQKPDD, AQYYCQRAYCHILLGNYCVAVADAKKSLELNPNN, and STAMLRKGICEYHEKNYAAALETFTEGQKLDIET. The region spanning 169-258 is the CS domain; that stretch reads QSKIKYDWYQ…PEAVRWEKLE (90 aa). Position 265 is a phosphothreonine (Thr265). An SGS domain is found at 276 to 365; sequence LYPSSSPYTR…PPDDMEWKKY (90 aa). Ser281 carries the phosphoserine modification. Thr284 carries the post-translational modification Phosphothreonine. Lys295 participates in a covalent cross-link: Glycyl lysine isopeptide (Lys-Gly) (interchain with G-Cter in SUMO1); alternate. Lys295 is covalently cross-linked (Glycyl lysine isopeptide (Lys-Gly) (interchain with G-Cter in SUMO2); alternate). Ser331 is modified (phosphoserine).

Belongs to the SGT1 family. In terms of assembly, probably associates with SCF (SKP1-CUL1-F-box protein) complex through interaction with SKP1. Interacts with S100A6. Interacts with HSP90. Post-translationally, phosphorylated at Ser-281 and Ser-331, dephosphorylation promotes nuclear translocation, most likely due to disruption of the SUGT1-HSP90 complex.

It is found in the cytoplasm. It localises to the nucleus. May play a role in ubiquitination and subsequent proteasomal degradation of target proteins. The chain is Protein SGT1 homolog from Homo sapiens (Human).